Here is a 294-residue protein sequence, read N- to C-terminus: tRNA dimethylallyltransferase (294 aa).

9–16 contributes to the ATP binding site; sequence GATATGKS. 11–16 is a substrate binding site; that stretch reads TATGKS. An interaction with substrate tRNA region spans residues 34-37; the sequence is DSRQ.

The protein belongs to the IPP transferase family. Monomer. The cofactor is Mg(2+).

It carries out the reaction adenosine(37) in tRNA + dimethylallyl diphosphate = N(6)-dimethylallyladenosine(37) in tRNA + diphosphate. Catalyzes the transfer of a dimethylallyl group onto the adenine at position 37 in tRNAs that read codons beginning with uridine, leading to the formation of N6-(dimethylallyl)adenosine (i(6)A). In Trichormus variabilis (strain ATCC 29413 / PCC 7937) (Anabaena variabilis), this protein is tRNA dimethylallyltransferase.